The chain runs to 20 residues: Apidaecin 1+ (20 aa).

The disordered stretch occupies residues Gly-1–Leu-20.

The protein belongs to the apidaecin family.

It localises to the secreted. Its function is as follows. Antimicrobial peptide active against many Gram-negative enterobacterial and plant-associated bacterial species. Not active against other bacterial species like H.pylori, P.mirabilis, B.pertussis or N.gonorrhoeae. Functionally, among others, also active against C.jejuni and L.pneumophila but not against Y.enterocolitica. Among others, also active against Y.enterocolitica butnot against L.pneumophila and C.jejuni. This chain is Apidaecin 1+, found in Pimpla disparis (Parasitic wasp).